The primary structure comprises 117 residues: 5-hydroxyisourate hydrolase (117 aa).

The substrate site is built by histidine 7, arginine 45, and tyrosine 114.

This sequence belongs to the transthyretin family. 5-hydroxyisourate hydrolase subfamily. In terms of assembly, homotetramer.

The enzyme catalyses 5-hydroxyisourate + H2O = 5-hydroxy-2-oxo-4-ureido-2,5-dihydro-1H-imidazole-5-carboxylate + H(+). Its function is as follows. Catalyzes the hydrolysis of 5-hydroxyisourate (HIU) to 2-oxo-4-hydroxy-4-carboxy-5-ureidoimidazoline (OHCU). This Ralstonia nicotianae (strain ATCC BAA-1114 / GMI1000) (Ralstonia solanacearum) protein is 5-hydroxyisourate hydrolase.